The sequence spans 133 residues: MWKDFKEFAMKGNVVDLAVGVIIGGAFGKIVTSLVNDVIMPILGLILGGINFTSAKLTLHGLNSEKPLTLNYGQFIQNILDFLIISFSIFLFIRLINRFKRKEEAVEEAKIPEISREEELLGEIRDLLKEKNK.

A run of 3 helical transmembrane segments spans residues 8 to 28 (FAMKGNVVDLAVGVIIGGAFG), 30 to 50 (IVTSLVNDVIMPILGLILGGI), and 73 to 93 (GQFIQNILDFLIISFSIFLFI).

The protein belongs to the MscL family. As to quaternary structure, homopentamer.

Its subcellular location is the cell membrane. Functionally, channel that opens in response to stretch forces in the membrane lipid bilayer. May participate in the regulation of osmotic pressure changes within the cell. The sequence is that of Large-conductance mechanosensitive channel from Hathewaya histolytica (Clostridium histolyticum).